The following is a 201-amino-acid chain: MAFELPNLPYEFDALEPYIDKETMEIHHDKHHNTYVTKLNAAIEGTDLENKSIEEIVANLDSVPSDIQTAVRNNGGGHLNHSLFWQLLTPNSEEKGTVIDKIKEEWGSLDKFKDEFAKKAAGQFGSGWAWLVVDKDGKLEIVSTPNQDNPITEGKTPILGLDVWEHAYYLKYQNKRPDYIDAFWNVVNWNKVDELYEAATK.

Positions 27, 81, 162, and 166 each coordinate Fe(3+). Residues H27, H81, D162, and H166 each contribute to the Mn(2+) site.

This sequence belongs to the iron/manganese superoxide dismutase family. As to quaternary structure, homodimer. The cofactor is Mn(2+). Fe(3+) is required as a cofactor.

The enzyme catalyses 2 superoxide + 2 H(+) = H2O2 + O2. Destroys superoxide anion radicals which are normally produced within the cells and which are toxic to biological systems. Catalyzes the dismutation of superoxide anion radicals into O2 and H2O2 by successive reduction and oxidation of the transition metal ion at the active site. In Staphylococcus carnosus, this protein is Superoxide dismutase [Mn/Fe] (sodA).